Consider the following 347-residue polypeptide: Isopentenyl-diphosphate delta-isomerase (347 aa).

11 to 12 (RK) is a substrate binding site. Residues 72-74 (AMT), Ser102, and Asn131 contribute to the FMN site. A substrate-binding site is contributed by Gln161. Glu162 contacts Mg(2+). FMN-binding positions include Lys192, Thr222, and 287–288 (AG).

The protein belongs to the IPP isomerase type 2 family. Homooctamer. Dimer of tetramers. FMN serves as cofactor. Requires NADPH as cofactor. It depends on Mg(2+) as a cofactor.

It localises to the cytoplasm. The enzyme catalyses isopentenyl diphosphate = dimethylallyl diphosphate. Involved in the biosynthesis of isoprenoids. Catalyzes the 1,3-allylic rearrangement of the homoallylic substrate isopentenyl (IPP) to its allylic isomer, dimethylallyl diphosphate (DMAPP). In Lactococcus lactis subsp. lactis (strain IL1403) (Streptococcus lactis), this protein is Isopentenyl-diphosphate delta-isomerase.